Consider the following 474-residue polypeptide: Alginate biosynthesis protein AlgX (474 aa).

The first 26 residues, 1–26 (MKTRTSRLFRLSALAAGLCLAQAALA), serve as a signal peptide directing secretion. The tract at residues 27–347 (ADPGAAPSYQ…QAMPLVDNGC (321 aa)) is SGNH hydrolase-like domain. Cys44 and Cys229 form a disulfide bridge. Residue Asp174 is part of the active site. His176 (proton acceptor) is an active-site residue. Ser269 (nucleophile) is an active-site residue. The cysteines at positions 347 and 460 are disulfide-linked. The segment at 348–474 (SGRKTVLSRK…AKASQSVAGR (127 aa)) is CBM domain.

The protein belongs to the AlgX family. As to quaternary structure, monomer. Interacts with AlgK and MucD.

Its subcellular location is the periplasm. It functions in the pathway glycan biosynthesis; alginate biosynthesis. Plays two roles in the biosynthesis of the exopolysaccharide alginate: protects alginate from degradation as the polymer traverses the periplasm, and also plays a role in its O-acetylation. Acetylation of alginate causes the cells in the biofilm to adhere better to lung epithelium, form microcolonies, and resist the effects of the host immune system and/or antibiotics. Displays a low acetylesterase activity in vitro using a pseudosubstrate, 3-carboxyumbelliferyl acetate. Probably has acetyltransferase activity in vivo. The chain is Alginate biosynthesis protein AlgX (algX) from Pseudomonas aeruginosa (strain ATCC 15692 / DSM 22644 / CIP 104116 / JCM 14847 / LMG 12228 / 1C / PRS 101 / PAO1).